Here is a 448-residue protein sequence, read N- to C-terminus: Glutamyl-tRNA reductase (448 aa).

Residues 49 to 52, S109, 114 to 116, and Q120 contribute to the substrate site; these read TCNR and ETQ. The active-site Nucleophile is the C50. 189-194 is a binding site for NADP(+); sequence GAGEMS.

Belongs to the glutamyl-tRNA reductase family. As to quaternary structure, homodimer.

It catalyses the reaction (S)-4-amino-5-oxopentanoate + tRNA(Glu) + NADP(+) = L-glutamyl-tRNA(Glu) + NADPH + H(+). It participates in porphyrin-containing compound metabolism; protoporphyrin-IX biosynthesis; 5-aminolevulinate from L-glutamyl-tRNA(Glu): step 1/2. Functionally, catalyzes the NADPH-dependent reduction of glutamyl-tRNA(Glu) to glutamate 1-semialdehyde (GSA). In Staphylococcus aureus (strain MRSA252), this protein is Glutamyl-tRNA reductase.